Reading from the N-terminus, the 37-residue chain is Potassium channel toxin alpha-KTx 4.8 (37 aa).

2 disulfides stabilise this stretch: Cys13/Cys33 and Cys17/Cys35.

Belongs to the short scorpion toxin superfamily. Potassium channel inhibitor family. Alpha-KTx 04 subfamily. In terms of tissue distribution, expressed by the venom gland.

It is found in the secreted. Functionally, reversible blocker of voltage-gated potassium channel Kv1.2/KCNA2 (Kd=65 nM) and calcium-activated potassium channels KCa2.2/KCNN2 (Kd=575 nM) and KCa3.1/KCNN4 (Kd=59 nM). The protein is Potassium channel toxin alpha-KTx 4.8 of Centruroides margaritatus (Central American bark Scorpion).